Consider the following 360-residue polypeptide: Histidinol-phosphate aminotransferase (360 aa).

At Lys-224 the chain carries N6-(pyridoxal phosphate)lysine.

Belongs to the class-II pyridoxal-phosphate-dependent aminotransferase family. Histidinol-phosphate aminotransferase subfamily. Pyridoxal 5'-phosphate is required as a cofactor.

The catalysed reaction is L-histidinol phosphate + 2-oxoglutarate = 3-(imidazol-4-yl)-2-oxopropyl phosphate + L-glutamate. The protein operates within amino-acid biosynthesis; L-histidine biosynthesis; L-histidine from 5-phospho-alpha-D-ribose 1-diphosphate: step 7/9. The sequence is that of Histidinol-phosphate aminotransferase from Methanococcoides burtonii (strain DSM 6242 / NBRC 107633 / OCM 468 / ACE-M).